A 199-amino-acid chain; its full sequence is Imidazoleglycerol-phosphate dehydratase (199 aa).

The protein belongs to the imidazoleglycerol-phosphate dehydratase family.

It localises to the cytoplasm. The catalysed reaction is D-erythro-1-(imidazol-4-yl)glycerol 3-phosphate = 3-(imidazol-4-yl)-2-oxopropyl phosphate + H2O. The protein operates within amino-acid biosynthesis; L-histidine biosynthesis; L-histidine from 5-phospho-alpha-D-ribose 1-diphosphate: step 6/9. The chain is Imidazoleglycerol-phosphate dehydratase from Paramagnetospirillum magneticum (strain ATCC 700264 / AMB-1) (Magnetospirillum magneticum).